A 1663-amino-acid polypeptide reads, in one-letter code: Glutamine-rich protein 2 (1663 aa).

5 disordered regions span residues 80–239 (HGGF…LVPA), 423–481 (GLVQ…GTGQ), 575–615 (AQPR…QHGL), 880–925 (TYQQ…QVYP), and 948–984 (RGPG…APGQ). Composition is skewed to polar residues over residues 84–103 (TSLT…QPSI) and 131–150 (GVSS…QQQP). Basic and acidic residues predominate over residues 171–182 (SDSDRHRSREKL). The span at 206 to 217 (QPSSVPASQSQV) shows a compositional bias: low complexity. Positions 958–975 (HGQEGLDPNRTRASDRHG) are enriched in basic and acidic residues. Coiled-coil stretches lie at residues 1085-1160 (KTVK…MENS) and 1286-1325 (EDHR…KADK). A compositionally biased stretch (basic and acidic residues) spans 1609–1619 (TRLPGILRKDS). The segment at 1609-1663 (TRLPGILRKDSSGTSKRKSQQPRPHVHRPPSLSSNGQLPSRPQSAQISAGNTSER) is disordered. A compositionally biased stretch (basic residues) spans 1623-1636 (SKRKSQQPRPHVHR). Residues 1639-1663 (SLSSNGQLPSRPQSAQISAGNTSER) show a composition bias toward polar residues.

Interacts with AKAP3, ODF2 and TSSK4. Interacts with AKAP4. In terms of tissue distribution, expressed in the sperm.

The protein resides in the nucleus membrane. It is found in the nucleus. It localises to the cytoplasm. The protein localises to the cell projection. Its subcellular location is the cilium. The protein resides in the flagellum. Functionally, has an essential role in the formation of sperm flagella and flagellar structure maintainance. It acts as a suppressor of ubiquitination and degradation of proteins involved in flagellar development and motility. This Homo sapiens (Human) protein is Glutamine-rich protein 2 (QRICH2).